The following is a 208-amino-acid chain: MIVIVDYDTGNTRNVKKALDYLGVNNQLSADPAIIMAASGLILPGVGAFKEAMKALNQRQLVPVIQAFAATGKPLLGICLGMQLLFDRSFEFGETAGLGLIPGEVVAIPTDSGLAVPHMGWNTNSLTQPDLFAAVFADQATYFVHSFYATTLPQFTLATTDYGQPLTSIVRRNNVLGTQFHPEKSGAIGLAGLKKFKEMTEDEALSRD.

The Glutamine amidotransferase type-1 domain maps to 1–206 (MIVIVDYDTG…KEMTEDEALS (206 aa)). Cysteine 79 serves as the catalytic Nucleophile. Catalysis depends on residues histidine 181 and glutamate 183.

As to quaternary structure, heterodimer of HisH and HisF.

Its subcellular location is the cytoplasm. The enzyme catalyses 5-[(5-phospho-1-deoxy-D-ribulos-1-ylimino)methylamino]-1-(5-phospho-beta-D-ribosyl)imidazole-4-carboxamide + L-glutamine = D-erythro-1-(imidazol-4-yl)glycerol 3-phosphate + 5-amino-1-(5-phospho-beta-D-ribosyl)imidazole-4-carboxamide + L-glutamate + H(+). It carries out the reaction L-glutamine + H2O = L-glutamate + NH4(+). Its pathway is amino-acid biosynthesis; L-histidine biosynthesis; L-histidine from 5-phospho-alpha-D-ribose 1-diphosphate: step 5/9. In terms of biological role, IGPS catalyzes the conversion of PRFAR and glutamine to IGP, AICAR and glutamate. The HisH subunit catalyzes the hydrolysis of glutamine to glutamate and ammonia as part of the synthesis of IGP and AICAR. The resulting ammonia molecule is channeled to the active site of HisF. The polypeptide is Imidazole glycerol phosphate synthase subunit HisH (Lacticaseibacillus casei (strain BL23) (Lactobacillus casei)).